A 247-amino-acid chain; its full sequence is 5-oxoprolinase subunit A (247 aa).

Belongs to the LamB/PxpA family. In terms of assembly, forms a complex composed of PxpA, PxpB and PxpC.

The catalysed reaction is 5-oxo-L-proline + ATP + 2 H2O = L-glutamate + ADP + phosphate + H(+). Its function is as follows. Catalyzes the cleavage of 5-oxoproline to form L-glutamate coupled to the hydrolysis of ATP to ADP and inorganic phosphate. This is 5-oxoprolinase subunit A from Ralstonia pickettii (strain 12J).